A 311-amino-acid polypeptide reads, in one-letter code: uncharacterized protein (311 aa).

The first 13 residues, 1–13 (MLLSLIFPIAVLG), serve as a signal peptide directing secretion. The N-linked (GlcNAc...) asparagine glycan is linked to asparagine 115.

The protein resides in the secreted. This is an uncharacterized protein from Encephalitozoon cuniculi (strain GB-M1) (Microsporidian parasite).